Consider the following 141-residue polypeptide: Nucleoside diphosphate kinase (141 aa).

ATP-binding residues include K11, F59, R87, T93, R104, and N114. The active-site Pros-phosphohistidine intermediate is H117.

This sequence belongs to the NDK family. In terms of assembly, homotetramer. Mg(2+) is required as a cofactor.

The protein resides in the cytoplasm. The enzyme catalyses a 2'-deoxyribonucleoside 5'-diphosphate + ATP = a 2'-deoxyribonucleoside 5'-triphosphate + ADP. It catalyses the reaction a ribonucleoside 5'-diphosphate + ATP = a ribonucleoside 5'-triphosphate + ADP. Major role in the synthesis of nucleoside triphosphates other than ATP. The ATP gamma phosphate is transferred to the NDP beta phosphate via a ping-pong mechanism, using a phosphorylated active-site intermediate. This chain is Nucleoside diphosphate kinase, found in Cupriavidus necator (strain ATCC 17699 / DSM 428 / KCTC 22496 / NCIMB 10442 / H16 / Stanier 337) (Ralstonia eutropha).